Here is an 848-residue protein sequence, read N- to C-terminus: Probable disease resistance protein At5g43730 (848 aa).

Residues 25–62 (SNYIHLMESNLDALQKTMEELKNGRDDLLARVSIEEDK) are a coiled coil. The NB-ARC domain occupies 137–439 (VAQKIIPKAE…CEGYINPNRY (303 aa)). 179-186 (GMGGIGKT) contacts ATP. LRR repeat units follow at residues 534-555 (NLSTLLLPYNKLVDISVGFFLF), 558-580 (KLVVLDLSTNWSLIELPEEISNL), 582-604 (SLQYLNLSLTGIKSLPVGLKKLR), 605-627 (KLIYLNLEFTNVLESLVGIATTL), and 629-649 (NLQVLKLFYSLFCVDDIIMEE).

This sequence belongs to the disease resistance NB-LRR family.

Its function is as follows. Probable disease resistance protein. The sequence is that of Probable disease resistance protein At5g43730 from Arabidopsis thaliana (Mouse-ear cress).